We begin with the raw amino-acid sequence, 249 residues long: 5-oxoprolinase subunit A (249 aa).

It belongs to the LamB/PxpA family. In terms of assembly, forms a complex composed of PxpA, PxpB and PxpC.

The enzyme catalyses 5-oxo-L-proline + ATP + 2 H2O = L-glutamate + ADP + phosphate + H(+). Its function is as follows. Catalyzes the cleavage of 5-oxoproline to form L-glutamate coupled to the hydrolysis of ATP to ADP and inorganic phosphate. The polypeptide is 5-oxoprolinase subunit A (Limosilactobacillus fermentum (strain NBRC 3956 / LMG 18251) (Lactobacillus fermentum)).